The sequence spans 367 residues: Protein-glutamate methylesterase/protein-glutamine glutaminase 2 (367 aa).

The 118-residue stretch at 15-132 (RALIVDDSAL…SQSMHEMAEE (118 aa)) folds into the Response regulatory domain. Asp-66 bears the 4-aspartylphosphate mark. A CheB-type methylesterase domain is found at 172–367 (KTSVRNVLAI…MADEIVKIVR (196 aa)). Residues Ser-184, His-211, and Asp-311 contribute to the active site.

This sequence belongs to the CheB family. In terms of processing, phosphorylated by CheA. Phosphorylation of the N-terminal regulatory domain activates the methylesterase activity.

The protein resides in the cytoplasm. The catalysed reaction is [protein]-L-glutamate 5-O-methyl ester + H2O = L-glutamyl-[protein] + methanol + H(+). It catalyses the reaction L-glutaminyl-[protein] + H2O = L-glutamyl-[protein] + NH4(+). Its function is as follows. Involved in chemotaxis. Part of a chemotaxis signal transduction system that modulates chemotaxis in response to various stimuli. Catalyzes the demethylation of specific methylglutamate residues introduced into the chemoreceptors (methyl-accepting chemotaxis proteins or MCP) by CheR. Also mediates the irreversible deamidation of specific glutamine residues to glutamic acid. This is Protein-glutamate methylesterase/protein-glutamine glutaminase 2 from Methanosarcina mazei (strain ATCC BAA-159 / DSM 3647 / Goe1 / Go1 / JCM 11833 / OCM 88) (Methanosarcina frisia).